Reading from the N-terminus, the 93-residue chain is Large ribosomal subunit protein uL23cz/uL23cy (93 aa).

Belongs to the universal ribosomal protein uL23 family. As to quaternary structure, part of the 50S ribosomal subunit.

It localises to the plastid. The protein localises to the chloroplast. In terms of biological role, binds to 23S rRNA. This Acorus calamus (Sweet flag) protein is Large ribosomal subunit protein uL23cz/uL23cy (rpl23-A).